A 685-amino-acid chain; its full sequence is Mesothelin-like protein (685 aa).

The first 32 residues, 1–32 (MSRTLRPSAMGSRVGALASPGLALLLSLTAHC), serve as a signal peptide directing secretion. The Extracellular portion of the chain corresponds to 33–627 (SGPQAKGLPK…GVSHTSGSPP (595 aa)). N-linked (GlcNAc...) asparagine glycans are attached at residues Asn-315 and Asn-400. Residues 603-624 (PPSSLIHSLDPPGNDGVSHTSG) form a disordered region. Residues 628–648 (VHLGYLSLAVALPSSLLWLLL) form a helical membrane-spanning segment. Residues 649–685 (CQLPSGQMATAHRTLGPMALAQGSWTPEHQIPEKRSC) are Cytoplasmic-facing.

It belongs to the mesothelin family.

The protein resides in the membrane. May play a role in cellular adhesion. The chain is Mesothelin-like protein (Mslnl) from Mus musculus (Mouse).